Reading from the N-terminus, the 280-residue chain is uncharacterized protein (280 aa).

The next 6 helical transmembrane spans lie at 46 to 66 (LIFLLALPFLTLPFDSYFVCT), 81 to 101 (IACSYFVFPLISYQIWCFLIP), 114 to 134 (FFYLSGSCFFLFLFLTFSWVV), 137 to 157 (VWHFLYFVGATSTNSLMIKLQ), 170 to 190 (ILFISSVCSQVPVIVICLLEL), and 225 to 245 (IVACFLISLIIELAIFVALIV). A disordered region spans residues 258-280 (ESGSIEKKNKSSPPPRTWQSNYQ).

This sequence belongs to the TatC family.

The protein resides in the mitochondrion membrane. This is an uncharacterized protein from Arabidopsis thaliana (Mouse-ear cress).